The chain runs to 225 residues: 2-C-methyl-D-erythritol 4-phosphate cytidylyltransferase (225 aa).

This sequence belongs to the IspD/TarI cytidylyltransferase family. IspD subfamily.

It catalyses the reaction 2-C-methyl-D-erythritol 4-phosphate + CTP + H(+) = 4-CDP-2-C-methyl-D-erythritol + diphosphate. Its pathway is isoprenoid biosynthesis; isopentenyl diphosphate biosynthesis via DXP pathway; isopentenyl diphosphate from 1-deoxy-D-xylulose 5-phosphate: step 2/6. In terms of biological role, catalyzes the formation of 4-diphosphocytidyl-2-C-methyl-D-erythritol from CTP and 2-C-methyl-D-erythritol 4-phosphate (MEP). The chain is 2-C-methyl-D-erythritol 4-phosphate cytidylyltransferase from Prochlorococcus marinus (strain MIT 9313).